Here is a 160-residue protein sequence, read N- to C-terminus: Arginine repressor (160 aa).

The protein belongs to the ArgR family.

It is found in the cytoplasm. It participates in amino-acid biosynthesis; L-arginine biosynthesis [regulation]. Its function is as follows. Regulates arginine biosynthesis genes. The protein is Arginine repressor of Anaeromyxobacter dehalogenans (strain 2CP-1 / ATCC BAA-258).